A 224-amino-acid polypeptide reads, in one-letter code: tRNA (guanine-N(7)-)-methyltransferase (224 aa).

S-adenosyl-L-methionine contacts are provided by glutamate 45, glutamate 70, aspartate 97, and aspartate 119. Aspartate 119 is an active-site residue. Substrate is bound by residues lysine 123, aspartate 155, and 199 to 202 (TEYE).

This sequence belongs to the class I-like SAM-binding methyltransferase superfamily. TrmB family.

It carries out the reaction guanosine(46) in tRNA + S-adenosyl-L-methionine = N(7)-methylguanosine(46) in tRNA + S-adenosyl-L-homocysteine. It participates in tRNA modification; N(7)-methylguanine-tRNA biosynthesis. In terms of biological role, catalyzes the formation of N(7)-methylguanine at position 46 (m7G46) in tRNA. The sequence is that of tRNA (guanine-N(7)-)-methyltransferase from Ureaplasma urealyticum serovar 10 (strain ATCC 33699 / Western).